Reading from the N-terminus, the 247-residue chain is Putative methyltransferase YqeM (247 aa).

This sequence belongs to the methyltransferase superfamily.

In terms of biological role, may be a S-adenosyl-L-methionine (SAM)-dependent methyltransferase. This chain is Putative methyltransferase YqeM (yqeM), found in Bacillus subtilis (strain 168).